The sequence spans 224 residues: 3-dehydroquinate dehydratase (224 aa).

3-dehydroquinate-binding positions include 35 to 37 and Arg-65; that span reads EFR. The active-site Proton donor/acceptor is the His-120. The Schiff-base intermediate with substrate role is filled by Lys-146. Positions 183, 202, and 206 each coordinate 3-dehydroquinate.

It belongs to the type-I 3-dehydroquinase family. Homodimer.

The catalysed reaction is 3-dehydroquinate = 3-dehydroshikimate + H2O. It functions in the pathway metabolic intermediate biosynthesis; chorismate biosynthesis; chorismate from D-erythrose 4-phosphate and phosphoenolpyruvate: step 3/7. Involved in the third step of the chorismate pathway, which leads to the biosynthesis of aromatic amino acids. Catalyzes the cis-dehydration of 3-dehydroquinate (DHQ) and introduces the first double bond of the aromatic ring to yield 3-dehydroshikimate. This Methanobrevibacter smithii (strain ATCC 35061 / DSM 861 / OCM 144 / PS) protein is 3-dehydroquinate dehydratase.